Reading from the N-terminus, the 454-residue chain is Inner membrane permease YgbN (454 aa).

Residue M1 is a topological domain, periplasmic. The helical transmembrane segment at 2 to 22 (STITLLCIALAGVIMLLLLVI) threads the bilayer. Over 23-27 (KAKVQ) the chain is Cytoplasmic. The chain crosses the membrane as a helical span at residues 28–48 (PFVALLLVSLLVALAAGIPAG). The Periplasmic portion of the chain corresponds to 49 to 52 (EVGK). Residues 53-73 (VMIAGMGGVLGSVTIIIGLGA) form a helical membrane-spanning segment. Topologically, residues 74–108 (MLGRMIEHSGGAESLANYFSRKLGDKRTIAALTLA) are cytoplasmic. A helical membrane pass occupies residues 109–129 (AFFLGIPVFFDVGFIILAPII). Topologically, residues 130–137 (YGFAKVAK) are periplasmic. A helical membrane pass occupies residues 138–158 (ISPLKFGLPVAGIMLTVHVAV). Residues 159–174 (PPHPGPVAAAGLLHAD) are Cytoplasmic-facing. A helical membrane pass occupies residues 175–195 (IGWLTIIGIAISIPVGVVGYF). Topologically, residues 196–235 (AAKIINKRQYAMSVEVLEQMQLAPASEEGATKLSDKINPP) are periplasmic. A helical transmembrane segment spans residues 236–256 (GVALVTSLIVIPIAIIMAGTV). Topologically, residues 257–273 (SATLMPPSHPLLGTLQL) are cytoplasmic. The chain crosses the membrane as a helical span at residues 274 to 294 (IGSPMVALMIALVLAFWLLAL). The Periplasmic segment spans residues 295–305 (RRGWSLQHTSD). The chain crosses the membrane as a helical span at residues 306–326 (IMGSALPTAAVVILVTGAGGV). Over 327–341 (FGKVLVESGVGKALA) the chain is Cytoplasmic. The helical transmembrane segment at 342–362 (NMLQMIDLPLLPAAFIISLAL) threads the bilayer. The Periplasmic segment spans residues 363–383 (RASQGSATVAILTTGGLLSEA). The helical transmembrane segment at 384–404 (VMGLNPIQCVLVTLAACFGGL) threads the bilayer. Over 405-433 (GASHINDSGFWIVTKYLGLSVADGLKTWT) the chain is Cytoplasmic. Residues 434-454 (VLTTILGFTGFLITWCVWAVI) traverse the membrane as a helical segment.

The protein belongs to the GntP permease family.

Its subcellular location is the cell inner membrane. This Escherichia coli (strain K12) protein is Inner membrane permease YgbN (ygbN).